We begin with the raw amino-acid sequence, 342 residues long: Isopentenyl-diphosphate delta-isomerase (342 aa).

12–13 is a binding site for substrate; that stretch reads RK. Residues 71–73, Ser101, and Asn129 contribute to the FMN site; that span reads AMT. 101–103 is a substrate binding site; that stretch reads SQR. Gln163 is a substrate binding site. Glu164 contacts Mg(2+). FMN contacts are provided by residues Lys195, Thr225, 272–274, and 293–294; these read GIR and AR.

This sequence belongs to the IPP isomerase type 2 family. As to quaternary structure, homooctamer. Dimer of tetramers. It depends on FMN as a cofactor. NADPH serves as cofactor. Requires Mg(2+) as cofactor.

It is found in the cytoplasm. It catalyses the reaction isopentenyl diphosphate = dimethylallyl diphosphate. Involved in the biosynthesis of isoprenoids. Catalyzes the 1,3-allylic rearrangement of the homoallylic substrate isopentenyl (IPP) to its allylic isomer, dimethylallyl diphosphate (DMAPP). The protein is Isopentenyl-diphosphate delta-isomerase of Mycolicibacterium vanbaalenii (strain DSM 7251 / JCM 13017 / BCRC 16820 / KCTC 9966 / NRRL B-24157 / PYR-1) (Mycobacterium vanbaalenii).